The chain runs to 173 residues: Large ribosomal subunit protein uL10 (173 aa).

Belongs to the universal ribosomal protein uL10 family. Part of the ribosomal stalk of the 50S ribosomal subunit. The N-terminus interacts with L11 and the large rRNA to form the base of the stalk. The C-terminus forms an elongated spine to which L12 dimers bind in a sequential fashion forming a multimeric L10(L12)X complex.

Forms part of the ribosomal stalk, playing a central role in the interaction of the ribosome with GTP-bound translation factors. This chain is Large ribosomal subunit protein uL10, found in Chloroherpeton thalassium (strain ATCC 35110 / GB-78).